The primary structure comprises 322 residues: Transaldolase (322 aa).

The Schiff-base intermediate with substrate role is filled by Lys136.

It belongs to the transaldolase family. Type 1 subfamily. Homodimer.

Its subcellular location is the cytoplasm. It catalyses the reaction D-sedoheptulose 7-phosphate + D-glyceraldehyde 3-phosphate = D-erythrose 4-phosphate + beta-D-fructose 6-phosphate. It participates in carbohydrate degradation; pentose phosphate pathway; D-glyceraldehyde 3-phosphate and beta-D-fructose 6-phosphate from D-ribose 5-phosphate and D-xylulose 5-phosphate (non-oxidative stage): step 2/3. Transaldolase is important for the balance of metabolites in the pentose-phosphate pathway. The chain is Transaldolase from Xanthomonas euvesicatoria pv. vesicatoria (strain 85-10) (Xanthomonas campestris pv. vesicatoria).